The chain runs to 183 residues: ATP synthase subunit delta (183 aa).

The protein belongs to the ATPase delta chain family. As to quaternary structure, F-type ATPases have 2 components, F(1) - the catalytic core - and F(0) - the membrane proton channel. F(1) has five subunits: alpha(3), beta(3), gamma(1), delta(1), epsilon(1). F(0) has three main subunits: a(1), b(2) and c(10-14). The alpha and beta chains form an alternating ring which encloses part of the gamma chain. F(1) is attached to F(0) by a central stalk formed by the gamma and epsilon chains, while a peripheral stalk is formed by the delta and b chains.

It is found in the cell membrane. In terms of biological role, f(1)F(0) ATP synthase produces ATP from ADP in the presence of a proton or sodium gradient. F-type ATPases consist of two structural domains, F(1) containing the extramembraneous catalytic core and F(0) containing the membrane proton channel, linked together by a central stalk and a peripheral stalk. During catalysis, ATP synthesis in the catalytic domain of F(1) is coupled via a rotary mechanism of the central stalk subunits to proton translocation. Functionally, this protein is part of the stalk that links CF(0) to CF(1). It either transmits conformational changes from CF(0) to CF(1) or is implicated in proton conduction. This is ATP synthase subunit delta from Oenococcus oeni (strain ATCC BAA-331 / PSU-1).